Consider the following 141-residue polypeptide: SLTKAERTIIGSMWTKISSQADTIGTETLERLFASYPQAKTYFPHFDLNPGSAQLRAHGSKVLAAVGEAVKSIDNVSAALAKLSELHAYVLRVDPVNFKFLSHCLLVTLASHFPADLTAEAHAAWDKFLTIVSGVLTEKYR.

Residue Ser1 is modified to N-acetylserine. Residues 1–141 (SLTKAERTII…VSGVLTEKYR (141 aa)) form the Globin domain. Phosphothreonine is present on Thr28. At Ser52 the chain carries Phosphoserine. Residue His58 coordinates heme b. A Phosphoserine modification is found at Ser72. A heme b-binding site is contributed by His87.

This sequence belongs to the globin family. Heterotetramer of two zeta chains and two epsilon chains.

Functionally, the zeta chain is an alpha-type chain of mammalian embryonic hemoglobin. The sequence is that of Hemoglobin subunit zeta from Sus scrofa (Pig).